The chain runs to 202 residues: Heart- and neural crest derivatives-expressed protein 1 (202 aa).

In terms of domain architecture, bHLH spans 83–135 (RKGVGGPKKERRRTESINSAFAELRECIPNVPADTKLSKIKTLRLATSYIAYL). The segment at 143 to 187 (SQPGEPEGFKAELKKADGRENKRKRETQPEVYSQPLAHGEKKLKG) is disordered. Over residues 149-162 (EGFKAELKKADGRE) the composition is skewed to basic and acidic residues.

In terms of assembly, efficient DNA binding requires dimerization with another bHLH protein.

The protein localises to the nucleus. Its subcellular location is the nucleoplasm. It is found in the nucleolus. In terms of biological role, transcription factor. Plays an essential role in cardiac morphogenesis. This Gallus gallus (Chicken) protein is Heart- and neural crest derivatives-expressed protein 1 (HAND1).